The primary structure comprises 590 residues: Selenoprotein N (590 aa).

The disordered stretch occupies residues Met-1–Arg-26. An N-terminal signal peptide occupies residues Met-1–Ala-43. A compositionally biased stretch (pro residues) spans Arg-9–Pro-23. Residues Thr-67–Ser-102 enclose the EF-hand domain. Residue Asn-126 is glycosylated (N-linked (GlcNAc...) asparagine). A non-standard amino acid (selenocysteine) is located at residue Sec-127. Residue Asn-190 is glycosylated (N-linked (GlcNAc...) asparagine). A non-standard amino acid (selenocysteine) is located at residue Sec-462. N-linked (GlcNAc...) asparagine glycans are attached at residues Asn-483, Asn-505, and Asn-531.

In terms of assembly, interacts with RYR1, RYR2 and RYR3. N-glycosylated. In terms of tissue distribution, isoform 1 and isoform 2 are expressed in skeletal muscle, brain, lung and placenta. Isoform 2 is also expressed in heart, diaphragm and stomach.

The protein localises to the endoplasmic reticulum membrane. Functionally, plays an important role in cell protection against oxidative stress and in the regulation of redox-related calcium homeostasis. Regulates the calcium level of the ER by protecting the calcium pump ATP2A2 against the oxidoreductase ERO1A-mediated oxidative damage. Within the ER, ERO1A activity increases the concentration of H(2)O(2), which attacks the luminal thiols in ATP2A2 and thus leads to cysteinyl sulfenic acid formation (-SOH) and SEPN1 reduces the SOH back to free thiol (-SH), thus restoring ATP2A2 activity. Acts as a modulator of ryanodine receptor (RyR) activity: protects RyR from oxidation due to increased oxidative stress, or directly controls the RyR redox state, regulating the RyR-mediated calcium mobilization required for normal muscle development and differentiation. Essential for muscle regeneration and satellite cell maintenance in skeletal muscle. The polypeptide is Selenoprotein N (Homo sapiens (Human)).